We begin with the raw amino-acid sequence, 96 residues long: Aspartyl/glutamyl-tRNA(Asn/Gln) amidotransferase subunit C (96 aa).

This sequence belongs to the GatC family. In terms of assembly, heterotrimer of A, B and C subunits.

The enzyme catalyses L-glutamyl-tRNA(Gln) + L-glutamine + ATP + H2O = L-glutaminyl-tRNA(Gln) + L-glutamate + ADP + phosphate + H(+). It carries out the reaction L-aspartyl-tRNA(Asn) + L-glutamine + ATP + H2O = L-asparaginyl-tRNA(Asn) + L-glutamate + ADP + phosphate + 2 H(+). In terms of biological role, allows the formation of correctly charged Asn-tRNA(Asn) or Gln-tRNA(Gln) through the transamidation of misacylated Asp-tRNA(Asn) or Glu-tRNA(Gln) in organisms which lack either or both of asparaginyl-tRNA or glutaminyl-tRNA synthetases. The reaction takes place in the presence of glutamine and ATP through an activated phospho-Asp-tRNA(Asn) or phospho-Glu-tRNA(Gln). The polypeptide is Aspartyl/glutamyl-tRNA(Asn/Gln) amidotransferase subunit C (Symbiobacterium thermophilum (strain DSM 24528 / JCM 14929 / IAM 14863 / T)).